The following is a 199-amino-acid chain: MAKVLVLYYSAYGHIEKMAYAVAEGAKSAGAEVTVKRVPELVPEEVAKASYFKLDQEAPIATPDELAEYDAIIVGAGTRFGTVASQMRNFWDQTGGLWFSGKLVGKVGSVFTSSATQHGGQESTILGFIPTLLHHGMAVVGLPYAFAGQMGTEEVKGGSPYGASTITNGDGSRQPSEIELEAAKYQGAHVAKIAAKLVA.

Residues 4-190 (VLVLYYSAYG…EAAKYQGAHV (187 aa)) form the Flavodoxin-like domain. FMN contacts are provided by residues 10–15 (SAYGHI) and 78–80 (TRF). Residue tyrosine 12 participates in NAD(+) binding. Tryptophan 98 is a binding site for substrate. FMN contacts are provided by residues 113–119 (SSATQHG) and histidine 134.

It belongs to the WrbA family. Requires FMN as cofactor.

It catalyses the reaction a quinone + NADH + H(+) = a quinol + NAD(+). The enzyme catalyses a quinone + NADPH + H(+) = a quinol + NADP(+). The protein is NAD(P)H dehydrogenase (quinone) of Rhizobium rhizogenes (strain K84 / ATCC BAA-868) (Agrobacterium radiobacter).